The chain runs to 327 residues: Expansin-B7 (327 aa).

Positions 1–30 (MAGRSRRRSFWSVGVAAALLCLLAAHGCSA) are cleaved as a signal peptide. The interval 30 to 88 (AKHHKPKPTPGGISGNASSSSSNSSTPSIPPPVAPTPTAPTPPIPSPGTGSSNGSSGGG) is disordered. The segment covering 44–56 (GNASSSSSNSSTP) has biased composition (low complexity). N-linked (GlcNAc...) asparagine glycans are attached at residues N45 and N52. Over residues 57-75 (SIPPPVAPTPTAPTPPIPS) the composition is skewed to pro residues. N82 carries N-linked (GlcNAc...) asparagine glycosylation. In terms of domain architecture, Expansin-like EG45 spans 112 to 218 (GGACGFKNVN…RRVPCQYPGL (107 aa)). 3 disulfides stabilise this stretch: C115–C143, C146–C213, and C151–C157. The Expansin-like CBD domain occupies 231 to 322 (VYMAILVEYE…DWQPNTVYSS (92 aa)). N298 carries an N-linked (GlcNAc...) asparagine glycan.

It belongs to the expansin family. Expansin B subfamily.

Its subcellular location is the secreted. The protein localises to the cell wall. It is found in the membrane. In terms of biological role, may cause loosening and extension of plant cell walls by disrupting non-covalent bonding between cellulose microfibrils and matrix glucans. No enzymatic activity has been found. May be required for rapid internodal elongation in deepwater rice during submergence. This Oryza sativa subsp. japonica (Rice) protein is Expansin-B7 (EXPB7).